Reading from the N-terminus, the 134-residue chain is Ribosome-binding factor A (134 aa).

This sequence belongs to the RbfA family. Monomer. Binds 30S ribosomal subunits, but not 50S ribosomal subunits or 70S ribosomes.

It localises to the cytoplasm. Functionally, one of several proteins that assist in the late maturation steps of the functional core of the 30S ribosomal subunit. Associates with free 30S ribosomal subunits (but not with 30S subunits that are part of 70S ribosomes or polysomes). Required for efficient processing of 16S rRNA. May interact with the 5'-terminal helix region of 16S rRNA. The protein is Ribosome-binding factor A of Bdellovibrio bacteriovorus (strain ATCC 15356 / DSM 50701 / NCIMB 9529 / HD100).